Here is a 413-residue protein sequence, read N- to C-terminus: Clusterin-associated protein 1 (413 aa).

Residues M185–S308 adopt a coiled-coil conformation. Residues K303 to F413 are disordered. 2 stretches are compositionally biased toward acidic residues: residues D312 to L328 and D360 to S388. A phosphoserine mark is found at S314, S324, and S326. Phosphoserine is present on S409.

The protein belongs to the CLUAP1 family. Interacts with CLU/clusterin. Interacts with UBXN10; the interaction is direct. Expressed in all tissues tested including heart, kidney, skeletal muscle, eye, liver, ovary, oviduct, testes, lung and brain. Elevated levels in multiciliated cells such as the bronchioles of the lungs, ependymal cells of the brain and cells with a single primary cilia of heart and kidney.

Its subcellular location is the cell projection. It is found in the cilium. The protein localises to the nucleus. Functionally, required for cilia biogenesis. Appears to function within the multiple intraflagellar transport complex B (IFT-B). Key regulator of hedgehog signaling. The protein is Clusterin-associated protein 1 (Cluap1) of Mus musculus (Mouse).